A 565-amino-acid polypeptide reads, in one-letter code: uncharacterized protein (565 aa).

5 helical membrane passes run 4-26 (FVQF…AVWV), 33-55 (GYGL…VGAA), 68-90 (SLLY…VNAL), 97-119 (YAIL…TQFF), and 162-184 (ISAM…IILL). RCK C-terminal domains lie at 210-295 (PNVD…LGPE) and 296-379 (VPDA…IFGV). 5 consecutive transmembrane segments (helical) span residues 389-411 (LLTL…PAFG), 415-432 (GLGN…VSSI), 453-472 (LGLI…DLLT), 482-504 (IFIV…GFHI), and 539-561 (WLGF…YFAM).

It belongs to the AAE transporter (TC 2.A.81) family.

It is found in the cell membrane. This is an uncharacterized protein from Bordetella parapertussis (strain 12822 / ATCC BAA-587 / NCTC 13253).